A 513-amino-acid polypeptide reads, in one-letter code: Probable DNA ligase (513 aa).

Glu213 contributes to the ATP binding site. The N6-AMP-lysine intermediate role is filled by Lys215. ATP contacts are provided by Arg220, Arg235, Glu264, Phe304, Arg376, and Lys382.

This sequence belongs to the ATP-dependent DNA ligase family. Mg(2+) is required as a cofactor.

The catalysed reaction is ATP + (deoxyribonucleotide)n-3'-hydroxyl + 5'-phospho-(deoxyribonucleotide)m = (deoxyribonucleotide)n+m + AMP + diphosphate.. In terms of biological role, DNA ligase that seals nicks in double-stranded DNA during DNA replication, DNA recombination and DNA repair. The sequence is that of Probable DNA ligase from Anaeromyxobacter sp. (strain K).